The following is a 212-amino-acid chain: Ribonuclease P protein component 3 (212 aa).

It belongs to the eukaryotic/archaeal RNase P protein component 3 family. In terms of assembly, consists of a catalytic RNA component and at least 5 protein subunits. Forms a heterotetrameric subcomplex with Rnp2. Reconstituted enzyme missing individual protein subunits is suboptimally active, showing each subunit contributes to optimization of activity.

The protein resides in the cytoplasm. It catalyses the reaction Endonucleolytic cleavage of RNA, removing 5'-extranucleotides from tRNA precursor.. In terms of biological role, part of ribonuclease P, a protein complex that generates mature tRNA molecules by cleaving their 5'-ends. Not absolutely essential for activity in vitro, however it strongly stimulates activity. Binds RNase P RNA. This is Ribonuclease P protein component 3 from Pyrococcus horikoshii (strain ATCC 700860 / DSM 12428 / JCM 9974 / NBRC 100139 / OT-3).